The primary structure comprises 635 residues: Early transcription factor 70 kDa subunit (635 aa).

The Helicase ATP-binding domain occupies 32–185 (RSIIDENKSV…SNIISLMSDE (154 aa)). 45 to 52 (HIMGSGKT) lines the ATP pocket. Residues 135–138 (DEAH) carry the DEXH box motif. In terms of domain architecture, Helicase C-terminal spans 326–505 (KFKYFINKIE…TLPFDIKKLL (180 aa)).

It belongs to the helicase family. VETF subfamily. In terms of assembly, heterodimer of a 70 kDa and a 82 kDa subunit. Part of the early transcription complex composed of ETF, RAP94, and the DNA-directed RNA polymerase.

The protein localises to the virion. In terms of biological role, acts with RNA polymerase to initiate transcription from early gene promoters. Is recruited by the RPO-associated protein of 94 kDa (RAP94) to form the early transcription complex, which also contains the core RNA polymerase. ETF heterodimer binds to early gene promoters. The sequence is that of Early transcription factor 70 kDa subunit (VETFS) from Oryctolagus cuniculus (Rabbit).